Reading from the N-terminus, the 460-residue chain is 4-O-methyl-glucuronoyl methylesterase (460 aa).

Residues 1 to 17 (MASRFFALLLLAIPIQA) form the signal peptide. A Pyrrolidone carboxylic acid modification is found at Gln-18. One can recognise a CBM1 domain in the interval 18–53 (QSPVWGQCGGIGWSGPTTCVGGATCVSYNPYYSQCI). 3 disulfide bridges follow: Cys-96–Cys-131, Cys-277–Cys-412, and Cys-309–Cys-384. The short motif at 276–281 (GCSRNG) is the GXSYXG catalytic site motif element. Ser-278 functions as the Nucleophile in the catalytic mechanism. Substrate is bound by residues Lys-282, Gln-324, Glu-332, and Trp-375. His-411 (proton donor/acceptor) is an active-site residue. N-linked (GlcNAc...) asparagine glycosylation is present at Asn-447.

Belongs to the carbohydrate esterase 15 (CE15) family.

The protein resides in the secreted. The catalysed reaction is a 4-O-methyl-alpha-D-glucuronosyl ester derivative + H2O = 4-O-methyl-alpha-D-glucuronate derivative + an alcohol + H(+). Functionally, glucuronoyl esterase which may play a significant role in biomass degradation, as it is considered to disconnect hemicellulose from lignin through the hydrolysis of the ester bond between 4-O-methyl-D-glucuronic acid residues of glucuronoxylans and aromatic alcohols of lignin. Does not hydrolyze substrates of other carbohydrate esterases such as acetylxylan esterase, acetyl esterase and feruloyl esterase. The chain is 4-O-methyl-glucuronoyl methylesterase from Hypocrea jecorina (strain QM6a) (Trichoderma reesei).